Here is an 818-residue protein sequence, read N- to C-terminus: Cytosolic phospholipase A2 delta (818 aa).

The region spanning 5–124 (SPGGPPGHPY…LPGKLLRKTF (120 aa)) is the C2 domain. Ca(2+)-binding residues include Asp-38, Asp-44, Asp-94, Asp-96, and Asp-102. One can recognise a PLA2c domain in the interval 273–818 (GCPEELAVHL…LEARPPRAQT (546 aa)). 330–331 (GG) lines the substrate pocket. Ser-361 (nucleophile) is an active-site residue. Asp-647 serves as the catalytic Proton acceptor.

The cofactor is Ca(2+). Expressed in stratified squamous epithelia, such as those in skin and cervix, but not in other tissues. Strongly expressed in the upper spinous layer of the psoriatic epidermis, expressed weakly and discontinuously in atopic dermatitis and mycosis fungoides, and not detected in the epidermis of normal skin.

It is found in the cytoplasm. The protein localises to the cytosol. Its subcellular location is the membrane. The enzyme catalyses a 1,2-diacyl-sn-glycero-3-phosphocholine + H2O = a 1-acyl-sn-glycero-3-phosphocholine + a fatty acid + H(+). The catalysed reaction is 1-hexadecanoyl-2-(5Z,8Z,11Z,14Z-eicosatetraenoyl)-sn-glycero-3-phosphocholine + H2O = 1-hexadecanoyl-sn-glycero-3-phosphocholine + (5Z,8Z,11Z,14Z)-eicosatetraenoate + H(+). It carries out the reaction 1-hexadecanoyl-2-(9Z,12Z-octadecadienoyl)-sn-glycero-3-phosphocholine + H2O = (9Z,12Z)-octadecadienoate + 1-hexadecanoyl-sn-glycero-3-phosphocholine + H(+). It catalyses the reaction 1-hexadecanoyl-2-(9Z-octadecenoyl)-sn-glycero-3-phosphocholine + H2O = 1-hexadecanoyl-sn-glycero-3-phosphocholine + (9Z)-octadecenoate + H(+). The enzyme catalyses 1-hexadecanoyl-2-(5Z,8Z,11Z,14Z-eicosatetraenoyl)-sn-glycero-3-phosphoethanolamine + H2O = 1-hexadecanoyl-sn-glycero-3-phosphoethanolamine + (5Z,8Z,11Z,14Z)-eicosatetraenoate + H(+). The catalysed reaction is 1-hexadecanoyl-2-(9Z,12Z-octadecadienoyl)-sn-glycero-3-phosphoethanolamine + H2O = 1-hexadecanoyl-sn-glycero-3-phosphoethanolamine + (9Z,12Z)-octadecadienoate + H(+). It functions in the pathway lipid metabolism; fatty acid metabolism. With respect to regulation, stimulated by cytosolic Ca(2+). Its function is as follows. Calcium-dependent phospholipase A2 that selectively hydrolyzes glycerophospholipids in the sn-2 position. Has a preference for linoleic acid at the sn-2 position. This Homo sapiens (Human) protein is Cytosolic phospholipase A2 delta.